Here is a 358-residue protein sequence, read N- to C-terminus: Peptide chain release factor 1 (358 aa).

At Gln233 the chain carries N5-methylglutamine.

Belongs to the prokaryotic/mitochondrial release factor family. Methylated by PrmC. Methylation increases the termination efficiency of RF1.

It is found in the cytoplasm. Functionally, peptide chain release factor 1 directs the termination of translation in response to the peptide chain termination codons UAG and UAA. This Macrococcus caseolyticus (strain JCSC5402) (Macrococcoides caseolyticum) protein is Peptide chain release factor 1.